The primary structure comprises 825 residues: Endoglucanase C (825 aa).

A signal peptide spans 1–28; it reads MRNKLRRLLAIMMAVLLITSLFAPMVSA. Catalysis depends on Glu219, which acts as the Proton donor. Residue Glu335 is the Nucleophile of the active site. The span at 607-621 shows a compositional bias: basic and acidic residues; the sequence is DRESVPEPVEHDTKG. The interval 607-635 is disordered; the sequence is DRESVPEPVEHDTKGDSALPSDFEDGTRQ.

Belongs to the glycosyl hydrolase 5 (cellulase A) family.

The catalysed reaction is Endohydrolysis of (1-&gt;4)-beta-D-glucosidic linkages in cellulose, lichenin and cereal beta-D-glucans.. The protein is Endoglucanase C (celC) of Evansella cellulosilytica (strain ATCC 21833 / DSM 2522 / FERM P-1141 / JCM 9156 / N-4) (Bacillus cellulosilyticus).